A 173-amino-acid polypeptide reads, in one-letter code: MSVDRKPRTSNDAHDLSELLVSVRRVSKVVKGGRRFSFSVLVVVGDEKGRVGCGMGKHAEVAEAKIKAVNAAKKNMIRVYLRESRTLHHDVTAKFCASRVILRSAKVGTGIIAGGSVRAVFEVLGVQDVVAKIVGSSNAHTVIYAVFSAFKSMLSPKQVAGKRGKKVCDVINR.

Residues 16–79 enclose the S5 DRBM domain; it reads LSELLVSVRR…NAAKKNMIRV (64 aa).

Belongs to the universal ribosomal protein uS5 family. In terms of assembly, part of the 30S ribosomal subunit. Contacts proteins S4 and S8.

In terms of biological role, with S4 and S12 plays an important role in translational accuracy. Located at the back of the 30S subunit body where it stabilizes the conformation of the head with respect to the body. The polypeptide is Small ribosomal subunit protein uS5 (Anaplasma phagocytophilum (strain HZ)).